We begin with the raw amino-acid sequence, 426 residues long: MKLQKPKGTQDILSVAAAKWQYVEGVARETFKQYHYGEIRTPMFEHYEVISRSVGDTTDIVTKEMYDFYDKGDRHITLRPEGTAPVVRSYVENKLFAPEVQKPVKLYYIGSMFRYERPQAGRLREFHQIGVECFGSANPATDVETIAMAYHLFERLGIKGVTLHLNSLGNAASRAAYRQALIDYLSPMRETLSKDSQRRLDENPLRVLDSKEKEDKIAVANVPSILDYLDEESQAHFDAVRSMLEALAIPYVIDTNMVRGLDYYNHTIFEFITEVDQSELTICAGGRYDGLVEYFGGPATPGFGFGLGLERLLLILDKQGVELPVEEGLDVYIAVLGADANVAALALTQAIRRQGFTVERDYLGRKIKAQFKSADTFKAKVVITLGESEIKAGQAVLKHNQTRQEMTVSFDQIQTDFASIFAECVQ.

It belongs to the class-II aminoacyl-tRNA synthetase family. As to quaternary structure, homodimer.

The protein localises to the cytoplasm. The catalysed reaction is tRNA(His) + L-histidine + ATP = L-histidyl-tRNA(His) + AMP + diphosphate + H(+). The polypeptide is Histidine--tRNA ligase (Streptococcus equi subsp. zooepidemicus (strain MGCS10565)).